Consider the following 194-residue polypeptide: FMN-dependent NADH:quinone oxidoreductase (194 aa).

FMN contacts are provided by residues Ser-10 and 90 to 93; that span reads MYNL.

It belongs to the azoreductase type 1 family. As to quaternary structure, homodimer. FMN is required as a cofactor.

It catalyses the reaction 2 a quinone + NADH + H(+) = 2 a 1,4-benzosemiquinone + NAD(+). The catalysed reaction is N,N-dimethyl-1,4-phenylenediamine + anthranilate + 2 NAD(+) = 2-(4-dimethylaminophenyl)diazenylbenzoate + 2 NADH + 2 H(+). Quinone reductase that provides resistance to thiol-specific stress caused by electrophilic quinones. Functionally, also exhibits azoreductase activity. Catalyzes the reductive cleavage of the azo bond in aromatic azo compounds to the corresponding amines. This chain is FMN-dependent NADH:quinone oxidoreductase, found in Haemophilus influenzae (strain 86-028NP).